A 1012-amino-acid chain; its full sequence is Putative cellulose synthase-like protein D5 (1012 aa).

The interval 1–85 (MSGDYANYTV…APSSNKSLLV (85 aa)) is disordered. Residues 20-37 (PSGGAPPAAPSAGGARPG) are compositionally biased toward low complexity. A compositionally biased stretch (basic and acidic residues) spans 57–69 (GGGDDGAKMDRRL). The next 2 helical transmembrane spans lie at 150 to 170 (ILSP…LFLV) and 180 to 200 (ALWL…SWLL). The active site involves Asp-280. The interval 597 to 620 (PRQGSEAMPGAGGGRSGGGSVGGD) is disordered. Over residues 606–618 (GAGGGRSGGGSVG) the composition is skewed to gly residues. Asp-717 is a catalytic residue. The next 6 membrane-spanning stretches (helical) occupy residues 799-819 (LFLI…QFIV), 825-845 (TFLS…LLEV), 871-891 (LAAV…SFTL), 914-934 (SLFI…VVGV), 948-968 (LLGG…FAKG), and 978-998 (TIVY…WITI).

The protein belongs to the glycosyltransferase 2 family. Plant cellulose synthase-like D subfamily.

Its subcellular location is the golgi apparatus membrane. Functionally, thought to be a Golgi-localized beta-glycan synthase that polymerize the backbones of noncellulosic polysaccharides (hemicelluloses) of plant cell wall. The sequence is that of Putative cellulose synthase-like protein D5 (CSLD5) from Oryza sativa subsp. indica (Rice).